The primary structure comprises 868 residues: Ionotropic receptor 93a (868 aa).

The first 28 residues, 1 to 28, serve as a signal peptide directing secretion; it reads MNPGEMRPSACLLLLAGLQLSILVPTEA. At 29-565 the chain is on the extracellular side; that stretch reads NDFSSFLSAN…ITRKPDEVSR (537 aa). Residues N38, N205, N294, N305, N432, N475, N499, and N543 are each glycosylated (N-linked (GlcNAc...) asparagine). A helical transmembrane segment spans residues 566-586; that stretch reads IYLFTAPFTVETWFCLMGIIL. Over 587-642 the chain is Cytoplasmic; sequence LTAPTLYAINRLAPLKEMRIVGLSTVKSCFWYIFGALLQQGGMYLPTADSGRLVVG. The helical transmembrane segment at 643-663 threads the bilayer; the sequence is FWWIVVIVLVTTYCGNLVAFL. Topologically, residues 664–832 are extracellular; sequence TFPKFQPGVD…HKVNMDDMQG (169 aa). N-linked (GlcNAc...) asparagine glycosylation occurs at N691. The chain crosses the membrane as a helical span at residues 833–853; that stretch reads CFLVLLLGFTLALLIVCGEFW. The Cytoplasmic segment spans residues 854–868; sequence YRRFRASRKRRQFTN.

The protein belongs to the glutamate-gated ion channel (TC 1.A.10.1) family. In the antenna, detected in sacculus neurons which innervate the first and second chambers (at protein level). Expressed in multiple cells of the larval dorsal organ ganglion, including the dorsal organ cool cells where it is predominately localized to the dendritic bulbs (at protein level).

It is found in the cell membrane. Its function is as follows. Integral part of various neural sensory systems in the antenna that provide the neural basis for the response to environmental changes in temperature (thermosensation) and humidity (hygrosensation). Together with Ir21a and Ir25a, mediates the response of the larval dorsal organ cool cells, a trio of cool-responsive neurons, to cooling and is required for cool avoidance behavior. Together with Ir25a and Ir40a, mediates the response of the hydrosensory sacculus neurons to changes in relative humidity, and is required for dry detection and humidiy preference behavior. This chain is Ionotropic receptor 93a, found in Drosophila melanogaster (Fruit fly).